The sequence spans 776 residues: ADP-ribosylation factor GTPase-activating protein AGD2 (776 aa).

In terms of domain architecture, BAR spans 2–226 (AGFINLEDSP…IHQVLTYAQQ (225 aa)). The tract at residues 248-267 (QSELDSQQASAKADPSDVGG) is disordered. The 132-residue stretch at 290–421 (EVTKQGYLLK…WVNKITAAIT (132 aa)) folds into the PH domain. Residues 467–604 (DDVLTILREI…ALVVKDEREA (138 aa)) form the Arf-GAP domain. Residues 482 to 505 (CAECNAPDPDWASLNLGVLMCIEC) form a C4-type zinc finger. ANK repeat units lie at residues 683 to 712 (QGCS…DINM) and 716 to 745 (HGRT…RPSI).

Expressed in roots, hypocotyls, cotyledons, leaf and shoot apical meristems and siliques.

Functionally, probable GTPase-activating protein. The polypeptide is ADP-ribosylation factor GTPase-activating protein AGD2 (AGD2) (Arabidopsis thaliana (Mouse-ear cress)).